Consider the following 115-residue polypeptide: Ribonuclease P protein component (115 aa).

The protein belongs to the RnpA family. As to quaternary structure, consists of a catalytic RNA component (M1 or rnpB) and a protein subunit.

It catalyses the reaction Endonucleolytic cleavage of RNA, removing 5'-extranucleotides from tRNA precursor.. Its function is as follows. RNaseP catalyzes the removal of the 5'-leader sequence from pre-tRNA to produce the mature 5'-terminus. It can also cleave other RNA substrates such as 4.5S RNA. The protein component plays an auxiliary but essential role in vivo by binding to the 5'-leader sequence and broadening the substrate specificity of the ribozyme. This is Ribonuclease P protein component from Buchnera aphidicola subsp. Acyrthosiphon pisum (strain APS) (Acyrthosiphon pisum symbiotic bacterium).